Here is a 62-residue protein sequence, read N- to C-terminus: Photosystem II reaction center protein Z (62 aa).

Transmembrane regions (helical) follow at residues 8-28 (AVFALIATSLILLISVPVVFA) and 41-61 (FSGTSLWIGLVFLVAILNSLI).

This sequence belongs to the PsbZ family. In terms of assembly, PSII is composed of 1 copy each of membrane proteins PsbA, PsbB, PsbC, PsbD, PsbE, PsbF, PsbH, PsbI, PsbJ, PsbK, PsbL, PsbM, PsbT, PsbY, PsbZ, Psb30/Ycf12, at least 3 peripheral proteins of the oxygen-evolving complex and a large number of cofactors. It forms dimeric complexes.

The protein localises to the plastid. It is found in the chloroplast thylakoid membrane. May control the interaction of photosystem II (PSII) cores with the light-harvesting antenna, regulates electron flow through the 2 photosystem reaction centers. PSII is a light-driven water plastoquinone oxidoreductase, using light energy to abstract electrons from H(2)O, generating a proton gradient subsequently used for ATP formation. The protein is Photosystem II reaction center protein Z of Phalaenopsis aphrodite subsp. formosana (Moth orchid).